The chain runs to 215 residues: Pyridoxine/pyridoxamine 5'-phosphate oxidase (215 aa).

Residues 11–14 (RRDY) and Lys-69 each bind substrate. FMN contacts are provided by residues 64-69 (RVVLLK), 79-80 (YT), Lys-86, and Gln-108. Residues Tyr-126, Arg-130, and Ser-134 each coordinate substrate. FMN contacts are provided by residues 143-144 (QS) and Trp-188. 194–196 (RLH) is a substrate binding site. Arg-198 lines the FMN pocket.

Belongs to the pyridoxamine 5'-phosphate oxidase family. In terms of assembly, homodimer. FMN is required as a cofactor.

It carries out the reaction pyridoxamine 5'-phosphate + O2 + H2O = pyridoxal 5'-phosphate + H2O2 + NH4(+). It catalyses the reaction pyridoxine 5'-phosphate + O2 = pyridoxal 5'-phosphate + H2O2. It participates in cofactor metabolism; pyridoxal 5'-phosphate salvage; pyridoxal 5'-phosphate from pyridoxamine 5'-phosphate: step 1/1. Its pathway is cofactor metabolism; pyridoxal 5'-phosphate salvage; pyridoxal 5'-phosphate from pyridoxine 5'-phosphate: step 1/1. Its function is as follows. Catalyzes the oxidation of either pyridoxine 5'-phosphate (PNP) or pyridoxamine 5'-phosphate (PMP) into pyridoxal 5'-phosphate (PLP). In Legionella pneumophila (strain Lens), this protein is Pyridoxine/pyridoxamine 5'-phosphate oxidase.